The chain runs to 44 residues: DNA-directed RNA polymerase subunit Rpo12 (44 aa).

Cysteine 8, cysteine 22, and cysteine 25 together coordinate Zn(2+).

This sequence belongs to the archaeal Rpo12/eukaryotic RPC10 RNA polymerase subunit family. Part of the RNA polymerase complex. The cofactor is Zn(2+).

The protein resides in the cytoplasm. It catalyses the reaction RNA(n) + a ribonucleoside 5'-triphosphate = RNA(n+1) + diphosphate. In terms of biological role, DNA-dependent RNA polymerase (RNAP) catalyzes the transcription of DNA into RNA using the four ribonucleoside triphosphates as substrates. The chain is DNA-directed RNA polymerase subunit Rpo12 from Natronomonas pharaonis (strain ATCC 35678 / DSM 2160 / CIP 103997 / JCM 8858 / NBRC 14720 / NCIMB 2260 / Gabara) (Halobacterium pharaonis).